The primary structure comprises 393 residues: NAD(P)H-quinone oxidoreductase subunit H, chloroplastic (393 aa).

This sequence belongs to the complex I 49 kDa subunit family. NDH is composed of at least 16 different subunits, 5 of which are encoded in the nucleus.

It localises to the plastid. It is found in the chloroplast thylakoid membrane. The enzyme catalyses a plastoquinone + NADH + (n+1) H(+)(in) = a plastoquinol + NAD(+) + n H(+)(out). It catalyses the reaction a plastoquinone + NADPH + (n+1) H(+)(in) = a plastoquinol + NADP(+) + n H(+)(out). Functionally, NDH shuttles electrons from NAD(P)H:plastoquinone, via FMN and iron-sulfur (Fe-S) centers, to quinones in the photosynthetic chain and possibly in a chloroplast respiratory chain. The immediate electron acceptor for the enzyme in this species is believed to be plastoquinone. Couples the redox reaction to proton translocation, and thus conserves the redox energy in a proton gradient. The polypeptide is NAD(P)H-quinone oxidoreductase subunit H, chloroplastic (Helianthus annuus (Common sunflower)).